A 106-amino-acid chain; its full sequence is Iron-sulfur cluster assembly protein CyaY (106 aa).

It belongs to the frataxin family.

In terms of biological role, involved in iron-sulfur (Fe-S) cluster assembly. May act as a regulator of Fe-S biogenesis. This Shigella flexneri protein is Iron-sulfur cluster assembly protein CyaY.